A 211-amino-acid polypeptide reads, in one-letter code: Ras-related protein Rab-38 (211 aa).

GTP-binding residues include Gly19, Val20, Gly21, Lys22, Thr23, Ser24, Ser35, Ser36, Tyr38, and Thr41. Thr23 contributes to the Mg(2+) binding site. Residues 32-46 (QNFSSHYRATIGVDF) carry the Switch 1 motif. Mg(2+) is bound by residues Thr41 and Asp65. Residues Gly68, Lys128, Asp130, Ala160, and Lys161 each coordinate GTP. The Switch 2 motif lies at 68–81 (GQERFGNMTRVYYR). A lipid anchor (S-palmitoyl cysteine) is attached at Cys205. A lipid anchor (S-geranylgeranyl cysteine) is attached at Cys208.

Belongs to the small GTPase superfamily. Rab family. Interacts with ANKRD27. Mg(2+) serves as cofactor.

The protein resides in the cell membrane. The protein localises to the cytoplasmic vesicle. It localises to the phagosome. Its subcellular location is the phagosome membrane. It is found in the melanosome. The protein resides in the melanosome membrane. The catalysed reaction is GTP + H2O = GDP + phosphate + H(+). Its activity is regulated as follows. Regulated by guanine nucleotide exchange factors (GEFs) including the BLOC-3 complex composed of HPS1 and HPS4 which promote the exchange of bound GDP for free GTP. Regulated by GTPase activating proteins (GAPs) including SGSM2 which increase the GTP hydrolysis activity. Inhibited by GDP dissociation inhibitors (GDIs). In terms of biological role, the small GTPases Rab are key regulators of intracellular membrane trafficking, from the formation of transport vesicles to their fusion with membranes. Rabs cycle between an inactive GDP-bound form and an active GTP-bound form that is able to recruit to membranes different sets of downstream effectors directly responsible for vesicle formation, movement, tethering and fusion. RAB38 plays a role in the maturation of phagosomes that engulf pathogens, such as S.aureus and Mycobacterium. May be involved in melanosomal transport and docking. Involved in the proper sorting of TYRP1. Involved in peripheral melanosomal distribution of TYRP1 in melanocytes; the function, which probably is implicating vesicle-trafficking, includes cooperation with ANKRD27 and VAMP7. Plays an important role in the control of melanin production and melanosome biogenesis. In concert with RAB32, regulates the proper trafficking of melanogenic enzymes TYR, TYRP1 and DCT/TYRP2 to melanosomes in melanocytes. This chain is Ras-related protein Rab-38, found in Mus musculus (Mouse).